A 120-amino-acid chain; its full sequence is UPF0102 protein CbuK_0265 (120 aa).

Belongs to the UPF0102 family.

The polypeptide is UPF0102 protein CbuK_0265 (Coxiella burnetii (strain CbuK_Q154) (Coxiella burnetii (strain Q154))).